A 243-amino-acid chain; its full sequence is tRNA (guanine-N(1)-)-methyltransferase (243 aa).

Residues glycine 111 and 130 to 135 (IGDYVL) contribute to the S-adenosyl-L-methionine site.

The protein belongs to the RNA methyltransferase TrmD family. In terms of assembly, homodimer.

It is found in the cytoplasm. The enzyme catalyses guanosine(37) in tRNA + S-adenosyl-L-methionine = N(1)-methylguanosine(37) in tRNA + S-adenosyl-L-homocysteine + H(+). Its function is as follows. Specifically methylates guanosine-37 in various tRNAs. The chain is tRNA (guanine-N(1)-)-methyltransferase from Acholeplasma laidlawii (strain PG-8A).